The primary structure comprises 232 residues: Large ribosomal subunit protein uL1 (232 aa).

Belongs to the universal ribosomal protein uL1 family. In terms of assembly, part of the 50S ribosomal subunit.

Functionally, binds directly to 23S rRNA. The L1 stalk is quite mobile in the ribosome, and is involved in E site tRNA release. Its function is as follows. Protein L1 is also a translational repressor protein, it controls the translation of the L11 operon by binding to its mRNA. This chain is Large ribosomal subunit protein uL1, found in Paraburkholderia xenovorans (strain LB400).